A 739-amino-acid polypeptide reads, in one-letter code: TonB-dependent heme receptor A (739 aa).

Positions 1-22 (MKMKKQCATLTFFIGLHGYTIA) are cleaved as a signal peptide. Positions 38-150 (GHHERQPDRS…FAGTIKLETK (113 aa)) constitute a TBDR plug domain. The TBDR beta-barrel domain maps to 161 to 739 (LLGGLLKYGY…NIKLSISKQF (579 aa)).

Belongs to the TonB-dependent receptor family.

The protein localises to the cell outer membrane. In terms of biological role, heme receptor. This is TonB-dependent heme receptor A (tdhA) from Haemophilus ducreyi (strain 35000HP / ATCC 700724).